Here is a 375-residue protein sequence, read N- to C-terminus: N5-carboxyaminoimidazole ribonucleotide synthase (375 aa).

Residues Arg108, Lys148, 153 to 159 (GYDGKGQ), 183 to 186 (EQYL), Glu191, His214, and 266 to 267 (NE) contribute to the ATP site. Positions 112–296 (KQTLLEANTQ…QFDTHILAIT (185 aa)) constitute an ATP-grasp domain.

This sequence belongs to the PurK/PurT family. Homodimer.

It catalyses the reaction 5-amino-1-(5-phospho-beta-D-ribosyl)imidazole + hydrogencarbonate + ATP = 5-carboxyamino-1-(5-phospho-D-ribosyl)imidazole + ADP + phosphate + 2 H(+). Its pathway is purine metabolism; IMP biosynthesis via de novo pathway; 5-amino-1-(5-phospho-D-ribosyl)imidazole-4-carboxylate from 5-amino-1-(5-phospho-D-ribosyl)imidazole (N5-CAIR route): step 1/2. In terms of biological role, catalyzes the ATP-dependent conversion of 5-aminoimidazole ribonucleotide (AIR) and HCO(3)(-) to N5-carboxyaminoimidazole ribonucleotide (N5-CAIR). This chain is N5-carboxyaminoimidazole ribonucleotide synthase, found in Staphylococcus epidermidis (strain ATCC 12228 / FDA PCI 1200).